The following is a 155-amino-acid chain: Late embryogenesis abundant protein 2 (155 aa).

Positions 1-155 (MTSHDQSYRA…DKDHFPTNRH (155 aa)) are disordered. 2 stretches are compositionally biased toward basic and acidic residues: residues 11-21 (GEAKGRTEEKT) and 28-39 (IEDKAQAAKEKA). A compositionally biased stretch (low complexity) spans 40-78 (QQAAQTAKDKTSQTAQAAKEKTQQTAQAAKDKTQQTTQA). 2 tandem repeats follow at residues 53–63 (TAQAAKEKTQQ) and 64–74 (TAQAAKDKTQQ). Residues 53-74 (TAQAAKEKTQQTAQAAKDKTQQ) are 2 X 11 AA approximate tandem repeats of T-A-Q-A-A-K-E-K-T-Q-Q. Basic and acidic residues predominate over residues 79–95 (TKEKAQDTTGRAKEKGS). A compositionally biased stretch (polar residues) spans 97 to 120 (MGQSTKETAQSGKDNSAGFLQQTG). The span at 144–155 (DQDKDHFPTNRH) shows a compositional bias: basic and acidic residues.

It belongs to the LEA type 4 family. In terms of tissue distribution, highest expression is found in seeds. No expression detected in adult tissues.

This is Late embryogenesis abundant protein 2 from Cicer arietinum (Chickpea).